Consider the following 953-residue polypeptide: MDYKKTLNLPDTPFPMRGDLAKREPAWVAQWEENHVYQAIRAASRGRPRFVLHDGPPYANGDIHIGHAVNKVLKDIIVKSRNMAGYDAHYVPGWDCHGMPIEIQIEKKFGKHLPVTEVQAKARAYALEQIDRQRKDFKRLGVLGEWDRPYLTMNFSNEANEIRALGGILQKGYVFRGLKPVNWCFDCGSALAEAEVEYADRVDPAVDVAFPFADKPGLAAAFGLDSVDDGAVVIWTTTPWTIPANQALNMHPELEYALVRATPAPAHGPLLLLARERVEACLKAWGLQGEVIATAPGAALSGLRFHHPLASADAGYARTSPVYLGDYVTLDAGTGVVHSAPAYGIEDFVSCKAHGLSDDDILNPVLGDGKYADSLPLFGGLSIWDANPRIIEALKAAGSLMDVQKLSHSYMHCWRHKTPIIYRATSQWFAGMDVKPADGGPTLRESALAGIDATAFYPSWGRARLHAMIANRPDWTLSRQRQWGVPMAFFVHKETGALHPRTAELLEQVAQRVEQHGIEAWQSLDPRELLGDEADQYEKNRDTLDVWFDSGTTHATVLGGKDQALGGSHGAELAWPADLYLEGSDQHRGWFHSSLLTGCMLYGQPPYKALLTHGFVVDGQGRKMSKSVGNVIAPQKVSDSLGAEILRLWVASTDYSGELSISDEILKRVVEGYRRIRNTLRFLLANVADFDAVSQAVPYGELFEIDRYALTMTAQMQAEVLAHYERYDFHPAVSRLQTFCSEDLGAFYLDILKDRLYTTAAGSLARRSAQTALLDITQALLKLMAPILSFTAEEAWQVLAQSALQHQADVSRTTIFTEVYHALPPFADADALAAKWARLRAIRAEVQRKLEDVRTAGGIGSSLQAEVDLYAGGDDRALLASLGDDLRFVLIVSRATVHEAQGELRVEITPSAHKKCERCWHWRLDVGSDADHPEICGRCVTNLFGAGEPRDKA.

The 'HIGH' region signature appears at 57–67 (PYANGDIHIGH). Position 582 (glutamate 582) interacts with L-isoleucyl-5'-AMP. The short motif at 623–627 (KMSKS) is the 'KMSKS' region element. Lysine 626 lines the ATP pocket. The Zn(2+) site is built by cysteine 916, cysteine 919, cysteine 936, and cysteine 939.

It belongs to the class-I aminoacyl-tRNA synthetase family. IleS type 1 subfamily. In terms of assembly, monomer. Requires Zn(2+) as cofactor.

Its subcellular location is the cytoplasm. It catalyses the reaction tRNA(Ile) + L-isoleucine + ATP = L-isoleucyl-tRNA(Ile) + AMP + diphosphate. Catalyzes the attachment of isoleucine to tRNA(Ile). As IleRS can inadvertently accommodate and process structurally similar amino acids such as valine, to avoid such errors it has two additional distinct tRNA(Ile)-dependent editing activities. One activity is designated as 'pretransfer' editing and involves the hydrolysis of activated Val-AMP. The other activity is designated 'posttransfer' editing and involves deacylation of mischarged Val-tRNA(Ile). The sequence is that of Isoleucine--tRNA ligase from Bordetella petrii (strain ATCC BAA-461 / DSM 12804 / CCUG 43448).